The primary structure comprises 946 residues: DNA primase (946 aa).

A disordered region spans residues 596–626 (RDTEEDEDGKEDKNNVPGNGVFQKTTSSVDT). Polar residues predominate over residues 617–626 (FQKTTSSVDT). Residues 881–920 (CLNYTHRNPQETVQVFIDLRTEHSYALWASLWSRCFTKKC) form a CHC2-type zinc finger.

It belongs to the herpesviridae DNA primase family. In terms of assembly, associates with the helicase and the primase-associated factor to form the helicase-primase factor.

The protein localises to the host nucleus. In terms of biological role, essential component of the helicase/primase complex. Unwinds the DNA at the replication forks and generates single-stranded DNA for both leading and lagging strand synthesis. The primase initiates primer synthesis and thereby produces large amount of short RNA primers on the lagging strand that the polymerase elongates using dNTPs. The protein is DNA primase (UL70) of Human cytomegalovirus (strain Merlin) (HHV-5).